Consider the following 322-residue polypeptide: D-alanine--D-alanine ligase (322 aa).

Residues 110 to 310 (KAVLAAAGIP…FDRLVFWIVE (201 aa)) form the ATP-grasp domain. 137-191 (MPPPYVVKPNAEGSSVGVSLVFEGANGPPRQLAAPDWAFGEQVMVEPYIPGLELA) is a binding site for ATP. Mg(2+) contacts are provided by D263, E277, and N279.

Belongs to the D-alanine--D-alanine ligase family. It depends on Mg(2+) as a cofactor. Mn(2+) serves as cofactor.

The protein resides in the cytoplasm. It carries out the reaction 2 D-alanine + ATP = D-alanyl-D-alanine + ADP + phosphate + H(+). Its pathway is cell wall biogenesis; peptidoglycan biosynthesis. In terms of biological role, cell wall formation. The chain is D-alanine--D-alanine ligase from Caulobacter sp. (strain K31).